A 204-amino-acid chain; its full sequence is Protein phosphatase 1 regulatory subunit 1B (204 aa).

M1 bears the N-acetylmethionine mark. The tract at residues 1-204 is disordered; that stretch reads MDPKDRKKIQ…QRPSPSEPGT (204 aa). T34 is subject to Phosphothreonine; by PKA. Residues 41 to 63 show a composition bias toward basic and acidic residues; the sequence is LSEHSSPEEEASPHQRASGEGHH. 2 positions are modified to phosphoserine: S45 and S46. The residue at position 75 (T75) is a Phosphothreonine; by CDK5. A compositionally biased stretch (polar residues) spans 89–100; sequence HLQSISNLNENQ. S102 carries the phosphoserine modification. Residues 109 to 118 show a composition bias toward basic and acidic residues; it reads GELRELGYPR. Acidic residues-rich tracts occupy residues 119-138 and 170-183; these read EEDE…EDSQ and DESE…DQVE. Residue S137 is modified to Phosphoserine. A Phosphoserine modification is found at S198.

The protein belongs to the protein phosphatase inhibitor 1 family. In terms of processing, dopamine- and cyclic AMP-regulated neuronal phosphoprotein. Phosphorylation of Thr-34 is required for activity.

The protein resides in the cytoplasm. Functionally, inhibitor of protein-phosphatase 1. In Homo sapiens (Human), this protein is Protein phosphatase 1 regulatory subunit 1B (PPP1R1B).